The chain runs to 263 residues: MRLDVISIFPDYLAPLELSLIGKARQDGLLELNVHDLRAFTTDRHRTVDDTPYGGGAGMVMKPEPWALALASVVEPAAKSKPVLIVPSPAGEVFNQRIAEELAAESHLVFACGRYEGIDERVVDWARESFTVRPMSLGDYVLNGGEVAVMAMVEATARLLPGVVGNPDSLLEESHQDGLLEYPVYTKPSAWRGVDIPAVLLSGNHAKIARFRRDEQLRRTAQRRPDLLTQLDPAILDRADLAVLRESGYLTVDGVLTRTSELG.

S-adenosyl-L-methionine-binding positions include Gly-113 and 137–142 (LGDYVL).

Belongs to the RNA methyltransferase TrmD family. As to quaternary structure, homodimer.

Its subcellular location is the cytoplasm. It catalyses the reaction guanosine(37) in tRNA + S-adenosyl-L-methionine = N(1)-methylguanosine(37) in tRNA + S-adenosyl-L-homocysteine + H(+). Specifically methylates guanosine-37 in various tRNAs. This chain is tRNA (guanine-N(1)-)-methyltransferase, found in Renibacterium salmoninarum (strain ATCC 33209 / DSM 20767 / JCM 11484 / NBRC 15589 / NCIMB 2235).